Here is a 30-residue protein sequence, read N- to C-terminus: Brevinin-2Rg (30 aa).

An intrachain disulfide couples Cys24 to Cys30.

In terms of tissue distribution, expressed by the skin glands.

It localises to the secreted. Antimicrobial peptide. In Pelophylax ridibundus (Marsh frog), this protein is Brevinin-2Rg.